A 453-amino-acid polypeptide reads, in one-letter code: Ribosomal protein uS12 methylthiotransferase RimO (453 aa).

The region spanning 6–116 (PKVGFVSLGC…VMEAVHEALP (111 aa)) is the MTTase N-terminal domain. The [4Fe-4S] cluster site is built by Cys15, Cys51, Cys80, Cys147, Cys151, and Cys154. Residues 133 to 370 (LTPRHYAYLK…MEKQAQISAA (238 aa)) form the Radical SAM core domain. In terms of domain architecture, TRAM spans 373–441 (EAKIGTVQQC…DHDLYGDALP (69 aa)).

This sequence belongs to the methylthiotransferase family. RimO subfamily. [4Fe-4S] cluster serves as cofactor.

It localises to the cytoplasm. It carries out the reaction L-aspartate(89)-[ribosomal protein uS12]-hydrogen + (sulfur carrier)-SH + AH2 + 2 S-adenosyl-L-methionine = 3-methylsulfanyl-L-aspartate(89)-[ribosomal protein uS12]-hydrogen + (sulfur carrier)-H + 5'-deoxyadenosine + L-methionine + A + S-adenosyl-L-homocysteine + 2 H(+). Catalyzes the methylthiolation of an aspartic acid residue of ribosomal protein uS12. In Stenotrophomonas maltophilia (strain R551-3), this protein is Ribosomal protein uS12 methylthiotransferase RimO.